The sequence spans 177 residues: Protein TERMINAL FLOWER 1 (177 aa).

The protein belongs to the phosphatidylethanolamine-binding protein family. In terms of tissue distribution, expressed below the apical dome of inflorescence and coflorescence meristems, and in inflorescence stem.

The protein localises to the cytoplasm. Its function is as follows. Controls inflorescence meristem identity and is required for maintenance of an indeterminate inflorescence. Prevents the expression of 'APETALA1' and 'LEAFY'. Also plays a role in the regulation of the time of flowering in the long-day flowering pathway. May form complexes with phosphorylated ligands by interfering with kinases and their effectors. In Arabidopsis thaliana (Mouse-ear cress), this protein is Protein TERMINAL FLOWER 1 (TFL1).